The following is a 1072-amino-acid chain: Carbamoyl phosphate synthase large chain (1072 aa).

The segment at 1–401 (MPKYKDINKV…SLLKAVRSLE (401 aa)) is carboxyphosphate synthetic domain. ATP is bound by residues R129, R169, G175, G176, K208, L210, E215, G241, V242, H243, Q284, and E298. Positions 133-327 (KRKMQEIGEP…IAKVAAKIAI (195 aa)) constitute an ATP-grasp 1 domain. Mg(2+) is bound by residues Q284, E298, and N300. Mn(2+) contacts are provided by Q284, E298, and N300. The interval 402–544 (IKAYGLRLNN…YIYSTYGEED (143 aa)) is oligomerization domain. The tract at residues 545–929 (EVEIHEIPKV…ALYKALEGAG (385 aa)) is carbamoyl phosphate synthetic domain. The region spanning 671-861 (SKLLKELNIN…MVKLAVEVAL (191 aa)) is the ATP-grasp 2 domain. Residues R707, K746, I748, E752, G777, V778, H779, S780, Q820, and E832 each coordinate ATP. Mg(2+) contacts are provided by Q820, E832, and N834. Positions 820, 832, and 834 each coordinate Mn(2+). An MGS-like domain is found at 930 to 1072 (LKIPKKGKIL…QKDNVKNLVL (143 aa)). Residues 930 to 1072 (LKIPKKGKIL…QKDNVKNLVL (143 aa)) are allosteric domain.

The protein belongs to the CarB family. Composed of two chains; the small (or glutamine) chain promotes the hydrolysis of glutamine to ammonia, which is used by the large (or ammonia) chain to synthesize carbamoyl phosphate. Tetramer of heterodimers (alpha,beta)4. It depends on Mg(2+) as a cofactor. The cofactor is Mn(2+).

The catalysed reaction is hydrogencarbonate + L-glutamine + 2 ATP + H2O = carbamoyl phosphate + L-glutamate + 2 ADP + phosphate + 2 H(+). It carries out the reaction hydrogencarbonate + NH4(+) + 2 ATP = carbamoyl phosphate + 2 ADP + phosphate + 2 H(+). The protein operates within amino-acid biosynthesis; L-arginine biosynthesis; carbamoyl phosphate from bicarbonate: step 1/1. It participates in pyrimidine metabolism; UMP biosynthesis via de novo pathway; (S)-dihydroorotate from bicarbonate: step 1/3. In terms of biological role, large subunit of the glutamine-dependent carbamoyl phosphate synthetase (CPSase). CPSase catalyzes the formation of carbamoyl phosphate from the ammonia moiety of glutamine, carbonate, and phosphate donated by ATP, constituting the first step of 2 biosynthetic pathways, one leading to arginine and/or urea and the other to pyrimidine nucleotides. The large subunit (synthetase) binds the substrates ammonia (free or transferred from glutamine from the small subunit), hydrogencarbonate and ATP and carries out an ATP-coupled ligase reaction, activating hydrogencarbonate by forming carboxy phosphate which reacts with ammonia to form carbamoyl phosphate. The protein is Carbamoyl phosphate synthase large chain of Thermoanaerobacter sp. (strain X514).